A 380-amino-acid chain; its full sequence is Methylthioribose-1-phosphate isomerase (380 aa).

Aspartate 257 functions as the Proton donor in the catalytic mechanism.

The protein belongs to the eIF-2B alpha/beta/delta subunits family. MtnA subfamily.

It localises to the cytoplasm. Its subcellular location is the nucleus. It catalyses the reaction 5-(methylsulfanyl)-alpha-D-ribose 1-phosphate = 5-(methylsulfanyl)-D-ribulose 1-phosphate. The protein operates within amino-acid biosynthesis; L-methionine biosynthesis via salvage pathway; L-methionine from S-methyl-5-thio-alpha-D-ribose 1-phosphate: step 1/6. Functionally, catalyzes the interconversion of methylthioribose-1-phosphate (MTR-1-P) into methylthioribulose-1-phosphate (MTRu-1-P). The protein is Methylthioribose-1-phosphate isomerase of Naegleria gruberi (Amoeba).